Consider the following 407-residue polypeptide: Phospholipase A1-II 7 (407 aa).

The Acyl-ester intermediate role is filled by Ser230. Active-site charge relay system residues include Ser230, Asp299, and His336.

Belongs to the AB hydrolase superfamily. Lipase family.

It localises to the cytoplasm. Acylhydrolase that catalyzes the hydrolysis of phospholipids at the sn-1 position. This Oryza sativa subsp. indica (Rice) protein is Phospholipase A1-II 7.